Here is a 420-residue protein sequence, read N- to C-terminus: Fasciclin-like arabinogalactan protein 8 (420 aa).

The signal sequence occupies residues 1 to 25 (MAASQTFSLLAFTFSLLAFASTVSS). FAS1 domains lie at 26 to 172 (HNIT…DAPI) and 186 to 326 (SLSN…DNVL). N-linked (GlcNAc...) asparagine glycans are attached at residues N27, N128, N162, N189, and N273. Residues 335–394 (SKSPSPAPAPEPVTAPTPSPADAPSPTAASPPAPPTDESPESAPSDSPTGSANSKSANAA) form a disordered region. Over residues 339-371 (SPAPAPEPVTAPTPSPADAPSPTAASPPAPPTD) the composition is skewed to pro residues. N392 carries GPI-anchor amidated asparagine lipidation. Residues 393 to 420 (AAVGVSTPSLFTALVTIAAIAVSVSLCS) constitute a propeptide, removed in mature form.

Belongs to the fasciclin-like AGP family. Expressed mainly in flowers and to a lesser extent in leaves and roots.

It is found in the cell membrane. In terms of biological role, may be a cell surface adhesion protein. The chain is Fasciclin-like arabinogalactan protein 8 (FLA8) from Arabidopsis thaliana (Mouse-ear cress).